The sequence spans 162 residues: NADH-quinone oxidoreductase subunit I 2 (162 aa).

4Fe-4S ferredoxin-type domains lie at 52 to 82 and 93 to 122; these read LRRYPNGEERCIACKLCEAVCPAQAITIEAG and ERYDIDMVKCIYCGLCQEACPVDAIVEGPN. Cysteine 62, cysteine 65, cysteine 68, cysteine 72, cysteine 102, cysteine 105, cysteine 108, and cysteine 112 together coordinate [4Fe-4S] cluster.

Belongs to the complex I 23 kDa subunit family. As to quaternary structure, NDH-1 is composed of 14 different subunits. Subunits NuoA, H, J, K, L, M, N constitute the membrane sector of the complex. [4Fe-4S] cluster serves as cofactor.

The protein resides in the cell inner membrane. It catalyses the reaction a quinone + NADH + 5 H(+)(in) = a quinol + NAD(+) + 4 H(+)(out). In terms of biological role, NDH-1 shuttles electrons from NADH, via FMN and iron-sulfur (Fe-S) centers, to quinones in the respiratory chain. The immediate electron acceptor for the enzyme in this species is believed to be ubiquinone. Couples the redox reaction to proton translocation (for every two electrons transferred, four hydrogen ions are translocated across the cytoplasmic membrane), and thus conserves the redox energy in a proton gradient. This chain is NADH-quinone oxidoreductase subunit I 2, found in Rhodopseudomonas palustris (strain BisA53).